The primary structure comprises 108 residues: BH3-like motif-containing cell death inducer (108 aa).

A BH3-like motif is present at residues 5–12; sequence LPIEGQEI.

Ubiquitously expressed.

It is found in the cytoplasm. It localises to the mitochondrion. Functionally, functions as a proapoptotic molecule through the caspase-dependent mitochondrial pathway of cell death. The sequence is that of BH3-like motif-containing cell death inducer (BLID) from Homo sapiens (Human).